The following is a 66-amino-acid chain: Pancreatic polypeptide prohormone (66 aa).

Tyr36 is modified (tyrosine amide). Positions 60-66 (ELSPMDV) are excised as a propeptide.

It belongs to the NPY family.

Its subcellular location is the secreted. Hormone secreted by pancreatic cells that acts as a regulator of pancreatic and gastrointestinal functions probably by signaling through the G protein-coupled receptor NPY4R2. This chain is Pancreatic polypeptide prohormone (PPY), found in Felis catus (Cat).